We begin with the raw amino-acid sequence, 120 residues long: Phosphoribosyl-ATP pyrophosphatase (120 aa).

The protein belongs to the PRA-PH family.

It localises to the cytoplasm. The enzyme catalyses 1-(5-phospho-beta-D-ribosyl)-ATP + H2O = 1-(5-phospho-beta-D-ribosyl)-5'-AMP + diphosphate + H(+). The protein operates within amino-acid biosynthesis; L-histidine biosynthesis; L-histidine from 5-phospho-alpha-D-ribose 1-diphosphate: step 2/9. The sequence is that of Phosphoribosyl-ATP pyrophosphatase from Methylibium petroleiphilum (strain ATCC BAA-1232 / LMG 22953 / PM1).